Here is an 803-residue protein sequence, read N- to C-terminus: MMSVRAINGCSIIRTATSAGGPPVSLFRHRIQRLRASHLREFSKLRLNFPLIRADRRFLGNSDAPSCSTCIHSLVESVSEELESISRRKGSRMRVRASVKVKLTSYGEVLEDKLVNQELEAGLLLEFKKDADRVLLAVLHRRDGKKNWMVFDQNGVSCSIKPQQITYIVPNVYNFDHTGLTDFLQRAQDNLDPQLLEFAWMELLEKNKPVTPEELAEMIYGRADPLESYCAHFLLSQDEIYFSILESKGSRSIYSPRPTEQVEELLRRQRVKEAEDKEFQEFIQLLKSAKKAPSHAKPPKSSWLADDKVQDRIGSLEAYAIDAWASTDQQKLAGTILKSMGLQKTSVSALNLLIDIGYFPVHVNLELLKLNLPTHHSEAITEAAEALLSESSDIDAVRRIDLTHLKVYAIDVDEADELDDALSATRLQDGRIKIWIHVADPARYVTPGSKVDREARRRGTSVFLPTATYPMFPEKLAMEGMSLRQGENCNAVSVSVVLRSDGCITEYSVDNSIIRPTYMLTYESASELLHLNLEEEAELKLLSEAAFIRSQWRREQGAVDTTTLETRIKVVNPEDPEPLINLYVENQADLAMRLVFEMMILCGEVVATFGSQHNIPLPYRGQPQSNIDVSAFAHLPEGPVRSSSIVKVMRAAEMNFRCPVRHGVLGIPGYVQFTSPIRRYMDLTAHYQIKAFLRGGDNFPFSAGELEGIAASVNMQSKVVRKLSNTGLRYWVIEFLRRQEKGKKYTALVLRFVKDRIASLLLVEVGFQATAWVSEGKQVGDEIEVRVEEAHPRDDLILFKEVI.

The transit peptide at 1 to 35 (MMSVRAINGCSIIRTATSAGGPPVSLFRHRIQRLR) directs the protein to the chloroplast and mitochondrion. The RNB domain occupies 399 to 694 (RIDLTHLKVY…AHYQIKAFLR (296 aa)).

It belongs to the RNR ribonuclease family. As to expression, expressed in seedlings, roots, leaves and flowers.

Its subcellular location is the mitochondrion. It localises to the plastid. The protein resides in the chloroplast. It catalyses the reaction Exonucleolytic cleavage in the 3'- to 5'-direction to yield nucleoside 5'-phosphates.. Functionally, 3'-5' exoribonuclease that catalyzes 3' maturation of chloroplast and mitochondrion ribosomal RNAs; degrades short nucleotidic extensions to generate the mature 3'-ends. Involved in the maturation of 23S, 16S and 5S rRNAs. The polypeptide is Ribonuclease II, chloroplastic/mitochondrial (RNR1) (Arabidopsis thaliana (Mouse-ear cress)).